The chain runs to 341 residues: Glucokinase (341 aa).

ATP is bound at residue 18-23 (GDIGGT).

The protein belongs to the bacterial glucokinase family.

The protein resides in the cytoplasm. It catalyses the reaction D-glucose + ATP = D-glucose 6-phosphate + ADP + H(+). The polypeptide is Glucokinase (Rhizobium etli (strain CIAT 652)).